Reading from the N-terminus, the 207-residue chain is LPS-assembly lipoprotein LptE (207 aa).

Residues 1 to 19 form the signal peptide; sequence MRHRILTLLLGLAVLVTAG. C20 carries N-palmitoyl cysteine lipidation. C20 is lipidated: S-diacylglycerol cysteine. The tract at residues 168-207 is disordered; sequence KNTQKNGDKPVSDANAAQGSTPTAVNETTLGEPAVSTSAK. Residues 182-207 are compositionally biased toward polar residues; sequence NAAQGSTPTAVNETTLGEPAVSTSAK.

The protein belongs to the LptE lipoprotein family. As to quaternary structure, component of the lipopolysaccharide transport and assembly complex. Interacts with LptD.

The protein resides in the cell outer membrane. Together with LptD, is involved in the assembly of lipopolysaccharide (LPS) at the surface of the outer membrane. Required for the proper assembly of LptD. Binds LPS and may serve as the LPS recognition site at the outer membrane. The chain is LPS-assembly lipoprotein LptE from Yersinia pseudotuberculosis serotype O:1b (strain IP 31758).